Consider the following 41-residue polypeptide: Sucrose porin (41 aa).

A signal peptide spans 1 to 22 (MYRKSTLAMLIALLTSAASAHA).

The protein belongs to the porin LamB (TC 1.B.3) family. Homotrimer.

The protein localises to the cell outer membrane. In terms of biological role, porin for sucrose uptake. The chain is Sucrose porin (scrY) from Salmonella thompson.